The following is a 130-amino-acid chain: Large ribosomal subunit protein bL17 (130 aa).

Belongs to the bacterial ribosomal protein bL17 family. In terms of assembly, part of the 50S ribosomal subunit. Contacts protein L32.

The sequence is that of Large ribosomal subunit protein bL17 from Shewanella halifaxensis (strain HAW-EB4).